The following is a 77-amino-acid chain: DNA-directed RNA polymerase subunit Rpo5 (77 aa).

The protein belongs to the archaeal Rpo5/eukaryotic RPB5 RNA polymerase subunit family. In terms of assembly, part of the RNA polymerase complex.

Its subcellular location is the cytoplasm. It carries out the reaction RNA(n) + a ribonucleoside 5'-triphosphate = RNA(n+1) + diphosphate. DNA-dependent RNA polymerase (RNAP) catalyzes the transcription of DNA into RNA using the four ribonucleoside triphosphates as substrates. In Methanosphaera stadtmanae (strain ATCC 43021 / DSM 3091 / JCM 11832 / MCB-3), this protein is DNA-directed RNA polymerase subunit Rpo5.